The chain runs to 229 residues: DNA repair protein RecO (229 aa).

Belongs to the RecO family.

Functionally, involved in DNA repair and RecF pathway recombination. This is DNA repair protein RecO from Pseudomonas fluorescens (strain ATCC BAA-477 / NRRL B-23932 / Pf-5).